Reading from the N-terminus, the 463-residue chain is Cysteine--tRNA ligase (463 aa).

Zn(2+) is bound at residue Cys-29. The short motif at 31–41 (PTVYDFAHIGN) is the 'HIGH' region element. Positions 227, 252, and 256 each coordinate Zn(2+). A 'KMSKS' region motif is present at residues 285 to 289 (KMSKS). Lys-288 serves as a coordination point for ATP.

This sequence belongs to the class-I aminoacyl-tRNA synthetase family. In terms of assembly, monomer. The cofactor is Zn(2+).

The protein resides in the cytoplasm. It catalyses the reaction tRNA(Cys) + L-cysteine + ATP = L-cysteinyl-tRNA(Cys) + AMP + diphosphate. This Rhodopseudomonas palustris (strain ATCC BAA-98 / CGA009) protein is Cysteine--tRNA ligase.